We begin with the raw amino-acid sequence, 400 residues long: WW domain-containing transcription regulator protein 1 (400 aa).

A Glycyl lysine isopeptide (Lys-Gly) (interchain with G-Cter in ubiquitin) cross-link involves residue Lys-46. Positions Phe-52–Ser-117 are disordered. Residues His-61–Ser-70 are compositionally biased toward polar residues. Phosphoserine is present on residues Ser-62 and Ser-89. Positions Pro-91–His-110 are enriched in low complexity. Positions Leu-124 to Lys-157 constitute a WW domain. The segment covering Asn-192–Thr-211 has biased composition (polar residues). The interval Asn-192–Ala-216 is disordered. A required for interaction with PALS1 region spans residues Pro-222–Leu-400. Phosphoserine is present on residues Ser-295 and Ser-311. A PDZ-binding motif is present at residues Glu-394–Leu-400.

As to quaternary structure, binds to SLC9A3R2 via the PDZ motif at the plasma membrane. Binds to YWHAZ in vivo and in vitro through the phosphoserine-binding motif RSHSSP. Interacts (via coiled-coil domain) with SMAD2 (via MH1 domain), SMAD3 and SMAD4. Interacts with MED15. Interacts with PAX8 and NKX2-1. Interacts with TEAD1, TEAD2, TEAD3 and TEAD4. Interacts (via WW domain) with PALS1. Interacts with LATS1. Interacts with YAP1 (when phosphorylated at 'Ser-112'). Interacts (via WW domain) with PRRG4 (via cytoplasmic domain). Interacts (via WW domain) with AMOTL2 (via PPXY motif); the interaction promotes WWTR1/TAZ localization to the cytoplasm and tight junctions, thereby inhibiting its transcriptional coactivator properties. Interacts (via WW domain) with AMOT; the interaction facilitates translocation of WWTR1/TAZ to the cytoplasm. Post-translationally, phosphorylated by LATS2 and STK3/MST2. Phosphorylation by LATS2 results in creation of 14-3-3 binding sites, retention in the cytoplasm, and functional inactivation. Phosphorylation results in the inhibition of transcriptional coactivation through YWHAZ-mediated nuclear export. Ubiquitinated at Lys-46; leading to proteasomal degradation. Deubiquitinated and stabilized by UCHL1 at Lys-46; leading to inhibition of osteoclastogenesis.

The protein resides in the cytoplasm. It localises to the nucleus. Its subcellular location is the cell membrane. It is found in the cell junction. The protein localises to the tight junction. In terms of biological role, transcriptional coactivator which acts as a downstream regulatory target in the Hippo signaling pathway that plays a pivotal role in organ size control and tumor suppression by restricting proliferation and promoting apoptosis. The core of this pathway is composed of a kinase cascade wherein STK3/MST2 and STK4/MST1, in complex with its regulatory protein SAV1, phosphorylates and activates LATS1/2 in complex with its regulatory protein MOB1, which in turn phosphorylates and inactivates YAP1 oncoprotein and WWTR1/TAZ. WWTR1 enhances PAX8 and NKX2-1/TTF1-dependent gene activation. In conjunction with YAP1, involved in the regulation of TGFB1-dependent SMAD2 and SMAD3 nuclear accumulation. Plays a key role in coupling SMADs to the transcriptional machinery such as the mediator complex. Regulates embryonic stem-cell self-renewal, promotes cell proliferation and epithelial-mesenchymal transition. The chain is WW domain-containing transcription regulator protein 1 from Canis lupus familiaris (Dog).